A 298-amino-acid polypeptide reads, in one-letter code: Mitochondrial substrate carrier family protein N (298 aa).

Residues 1–13 (MAGDLTPSLFLKY) lie on the Mitochondrial intermembrane side of the membrane. Solcar repeat units follow at residues 8-92 (SLFL…FKKT), 104-188 (FRIP…TAEN), and 207-290 (QKLS…IKQM). A helical transmembrane segment spans residues 14–34 (GFGGALSCSITHSLVVPLDVV). Topologically, residues 35 to 60 (KTLLQTNPGKYTGMMNGFSTVIKEQG) are mitochondrial matrix. The helical transmembrane segment at 61–81 (PSGLLQGLGPTAVGYALQGFL) threads the bilayer. Over 82 to 105 (KFGFYEVFKKTYADAVGEKADQFR) the chain is Mitochondrial intermembrane. The chain crosses the membrane as a helical span at residues 106 to 126 (IPIWLAASATAEVIADIALCP). Topologically, residues 127-162 (NEAVRIRLVAEPTFAKSPVEAFGKIFKQEGVLGFYK) are mitochondrial matrix. The helical transmembrane segment at 163–179 (GLPPILLKQVPYTMAKF) threads the bilayer. At 180 to 208 (AVFEFTAENVYKGLAASGKPKESLTDGQK) the chain is on the mitochondrial intermembrane side. Residues 209–229 (LSVSLGSGIVAGIVAAIVSQP) form a helical membrane-spanning segment. Over 230–262 (ADTILSKINQEKTDGGVVKAIGNIMRRLGVRGL) the chain is Mitochondrial matrix. The chain crosses the membrane as a helical span at residues 263–283 (FLGLPTRCFMVGTLTAGQFFI). At 284-298 (YDGIKQMLGLTPAKK) the chain is on the mitochondrial intermembrane side.

This sequence belongs to the mitochondrial carrier (TC 2.A.29) family.

It localises to the mitochondrion inner membrane. Mitochondrial solute carriers shuttle metabolites, nucleotides, and cofactors through the mitochondrial inner membrane. Transports phosphate groups from the cytosol to the mitochondrial matrix. Phosphate is cotransported with H(+). The polypeptide is Mitochondrial substrate carrier family protein N (mcfN) (Dictyostelium discoideum (Social amoeba)).